The primary structure comprises 304 residues: Phospholipase A1 (304 aa).

Cys-6 and Cys-90 are oxidised to a cystine. Asn-61 carries N-linked (GlcNAc...) asparagine glycosylation. Ser-140 (nucleophile) is an active-site residue. Catalysis depends on Asp-168, which acts as the Charge relay system. Disulfide bonds link Cys-179–Cys-184 and Cys-222–Cys-231. The active-site Charge relay system is His-233. 3 disulfides stabilise this stretch: Cys-248-Cys-272, Cys-249-Cys-297, and Cys-265-Cys-270.

It belongs to the AB hydrolase superfamily. Lipase family. In terms of tissue distribution, expressed by the venom gland.

The protein resides in the secreted. It carries out the reaction a 1,2-diacyl-sn-glycero-3-phosphocholine + H2O = a 2-acyl-sn-glycero-3-phosphocholine + a fatty acid + H(+). In terms of biological role, catalyzes the hydrolysis of phosphatidylcholine with phospholipase A1 activity. May act as an allergen and induce hemolytic activity. This Vespa velutina (Asian yellow-legged hornet) protein is Phospholipase A1.